The primary structure comprises 339 residues: Anthranilate phosphoribosyltransferase (339 aa).

Residues glycine 81, 84-85 (GD), serine 89, 91-94 (NVSS), 109-117 (KHGNRALSS), and alanine 121 each bind 5-phospho-alpha-D-ribose 1-diphosphate. Glycine 81 provides a ligand contact to anthranilate. Serine 93 is a Mg(2+) binding site. Anthranilate is bound at residue asparagine 112. Arginine 167 is a binding site for anthranilate. Mg(2+) is bound by residues aspartate 225 and glutamate 226.

The protein belongs to the anthranilate phosphoribosyltransferase family. Homodimer. Mg(2+) is required as a cofactor.

The catalysed reaction is N-(5-phospho-beta-D-ribosyl)anthranilate + diphosphate = 5-phospho-alpha-D-ribose 1-diphosphate + anthranilate. The protein operates within amino-acid biosynthesis; L-tryptophan biosynthesis; L-tryptophan from chorismate: step 2/5. Catalyzes the transfer of the phosphoribosyl group of 5-phosphorylribose-1-pyrophosphate (PRPP) to anthranilate to yield N-(5'-phosphoribosyl)-anthranilate (PRA). The chain is Anthranilate phosphoribosyltransferase from Brucella suis (strain ATCC 23445 / NCTC 10510).